Here is a 1485-residue protein sequence, read N- to C-terminus: Cystic fibrosis transmembrane conductance regulator (1485 aa).

The Cytoplasmic portion of the chain corresponds to 1 to 78; it reads MQKTPLEKAS…KLINALKRCF (78 aa). Residues 79–99 traverse the membrane as a helical segment; that stretch reads FWKFLFYGILLYLGEVTKAVQ. Residues 82–366 enclose the ABC transmembrane type-1 1 domain; sequence FLFYGILLYL…WAVQTWYDSL (285 aa). Topologically, residues 100-123 are extracellular; it reads PLLLGRIIASYDRDNEHERSIAYY. Residues 124 to 147 form a helical membrane-spanning segment; sequence LAIGLCLLFVVRMLLLHPAIFGLH. The Cytoplasmic portion of the chain corresponds to 148–196; it reads HIGMQMRIAMFSLIYKKTLKLSSKVLDKISTGQLVSLLSNNLNKFDEGL. Residues 197–217 form a helical membrane-spanning segment; it reads ALAHFVWIAPLQVLLLMGLLW. Over 218-223 the chain is Extracellular; it reads DLLQAS. The chain crosses the membrane as a helical span at residues 224–244; that stretch reads AFCGLGFLIILSLFQARLGRM. The Cytoplasmic portion of the chain corresponds to 245-299; it reads MMKYKDKRAGKINERLVITSQIIENIQSVKAYCWENAMEKIIETIRETELKLTRK. Residues 300 to 320 form a helical membrane-spanning segment; the sequence is AAYVRYFNSSAFFFSGFFVVF. Over 321-340 the chain is Extracellular; it reads LSIVPHLLLDGISLRKIFTT. The chain crosses the membrane as a helical span at residues 341–359; sequence ISFSIVLRMAVTRQFPWAV. Over 360 to 860 the chain is Cytoplasmic; sequence QTWYDSLGVI…YLRFLTAHKN (501 aa). ATP contacts are provided by residues Trp-402, Ser-435, 459–466, and Gln-494; that span reads GSTGAGKT. An ABC transporter 1 domain is found at 422–647; it reads ISNEDPSAFF…RPEFSSHLIG (226 aa). The segment at 652–833 is disordered R region; the sequence is NAERRNSIIT…EEINEEDLKE (182 aa). A compositionally biased stretch (polar residues) spans 750–760; sequence PRSNFLNTGPT. Residues 861–881 traverse the membrane as a helical segment; sequence FIFILVFCLVIFFVEVAASSA. The 284-residue stretch at 880 to 1163 folds into the ABC transmembrane type-1 2 domain; that stretch reads SAWLWIIKRN…ASIDVDSLMR (284 aa). Residues 882–923 are Extracellular-facing; it reads WLWIIKRNAPAINMTSNENVSEVSDTLSVIVTHTSFYYVFYI. 2 N-linked (GlcNAc...) asparagine glycosylation sites follow: Asn-894 and Asn-900. Residues 924–944 form a discontinuously helical membrane-spanning segment; the sequence is YVGVADSLLALGIFRGLPLVH. The Cytoplasmic segment spans residues 945–995; the sequence is SLISVSKVLHKKMLHAILHAPMSTFNTMRAGRILNRFSKDTAILDDILPLS. A helical transmembrane segment spans residues 996–1016; it reads IFDLTQLVLIVIGAITVVSLL. The Extracellular portion of the chain corresponds to 1017–1018; that stretch reads EP. The chain crosses the membrane as a helical span at residues 1019-1039; it reads YIFLATVPVIVAFILLRSYFL. Residues 1040 to 1100 lie on the Cytoplasmic side of the membrane; the sequence is HTSQQLKQLE…TANWFLYLST (61 aa). Residues 1101–1121 form a helical membrane-spanning segment; the sequence is LRWFQMTIEMIFVIFFIAVSF. Residues 1122–1135 are Extracellular-facing; that stretch reads ISIATSGAGEEKVG. Residues 1136–1156 traverse the membrane as a helical segment; it reads IVLTLAMNIMNTLQWAVNASI. Over 1157–1485 the chain is Cytoplasmic; the sequence is DVDSLMRSVS…TEEEVQDTRL (329 aa). The ABC transporter 2 domain maps to 1213–1446; sequence MTVKNLSANY…KSFFKQAISH (234 aa). ATP contacts are provided by residues Tyr-1222 and 1247-1254; that span reads GRTGSGKS. The disordered stretch occupies residues 1458-1485; it reads RNSSKRKSRPQISALQEETEEEVQDTRL. Residues 1474–1485 are compositionally biased toward acidic residues; it reads EETEEEVQDTRL. The PDZ-binding signature appears at 1483 to 1485; it reads TRL.

The protein belongs to the ABC transporter superfamily. ABCC family. CFTR transporter (TC 3.A.1.202) subfamily. As to quaternary structure, monomer; does not require oligomerization for channel activity. May form oligomers in the membrane. In terms of processing, phosphorylated; cAMP treatment promotes phosphorylation and activates the channel. Dephosphorylation decreases the ATPase activity (in vitro). Phosphorylation at PKA sites activates the channel. Phosphorylation at PKC sites enhances the response to phosphorylation by PKA.

The protein resides in the apical cell membrane. It is found in the early endosome membrane. The protein localises to the cell membrane. Its subcellular location is the recycling endosome membrane. It localises to the endoplasmic reticulum membrane. The enzyme catalyses ATP + H2O + closed Cl(-) channel = ADP + phosphate + open Cl(-) channel.. It carries out the reaction chloride(in) = chloride(out). It catalyses the reaction hydrogencarbonate(in) = hydrogencarbonate(out). The catalysed reaction is ATP + H2O = ADP + phosphate + H(+). Functionally, epithelial ion channel that plays an important role in the regulation of epithelial ion and water transport and fluid homeostasis. Mediates the transport of chloride ions across the cell membrane. Possesses an intrinsic ATPase activity and utilizes ATP to gate its channel; the passive flow of anions through the channel is gated by cycles of ATP binding and hydrolysis by the ATP-binding domains. The ion channel is also permeable to HCO(3)(-); selectivity depends on the extracellular chloride concentration. Exerts its function also by modulating the activity of other ion channels and transporters. Contributes to the regulation of the pH and the ion content of the epithelial fluid layer. The sequence is that of Cystic fibrosis transmembrane conductance regulator from Xenopus laevis (African clawed frog).